The sequence spans 68 residues: Protein SlyX homolog (68 aa).

It belongs to the SlyX family.

This is Protein SlyX homolog from Pseudomonas fluorescens (strain SBW25).